Reading from the N-terminus, the 159-residue chain is MQSKEDFIEMRVPASAEYVSLIRLTLSGVFSRAGATYDDIEDAKIAVSEAVTNAVKHAYKENNNVGIINIYFEILEDKIKIVISDKGDSFDYETTKSKIGPYDKNENIDFLREGGLGLFLIESLMDEVTVYKESGVTISMTKYIKKEQVRNNGERVEIS.

Belongs to the anti-sigma-factor family.

It carries out the reaction L-seryl-[protein] + ATP = O-phospho-L-seryl-[protein] + ADP + H(+). The enzyme catalyses L-threonyl-[protein] + ATP = O-phospho-L-threonyl-[protein] + ADP + H(+). Functionally, negative regulator of sigma-B activity. Phosphorylates and inactivates its specific antagonist protein, RsbV. Upon phosphorylation of RsbV, RsbW is released and binds to sigma-B, thereby blocking its ability to form an RNA polymerase holoenzyme (E-sigma-B). This Staphylococcus aureus (strain MSSA476) protein is Serine-protein kinase RsbW.